A 301-amino-acid polypeptide reads, in one-letter code: (R)-2-haloacid dehalogenase (301 aa).

It belongs to the HAD-like hydrolase superfamily. S-2-haloalkanoic acid dehalogenase family. In terms of assembly, homotetramer.

The catalysed reaction is an (R)-2-haloacid + H2O = a (2S)-2-hydroxycarboxylate + a halide anion + H(+). In terms of biological role, catalyzes the hydrolytic dehalogenation of small (R)-2-haloalkanoic acids to yield the corresponding (S)-2-hydroxyalkanoic acids. Acts on acids of short chain lengths, C(2) to C(4), with inversion of configuration at C-2. This chain is (R)-2-haloacid dehalogenase (hadD), found in Pseudomonas putida (Arthrobacter siderocapsulatus).